Consider the following 988-residue polypeptide: MSSSAIDADISPASLAARFAAGPQLHAPDEAEKRCADWLADVPAELAAPIRAVADRCPNLRIALQSIAEASPYLFDLIRADPARLLRLLRSEPETGFRALLDATAAAVATASDEAEVMAVLRRMKAEAALSIALCDIGGLWPVLQVTQALTDLAVQSVQMTLRFLLRQEAARGRIHPPNPDAPEERSGLIVLAMGKMGAGELNYSSDIDLIVFYELDAPTLAPDIEPQPFFVRVTQGLSRILQQRRHDGYVFRVDLRLRPDPASTPVALSTASALNYYEREGRTWERAAMIKARACAGDVVAGEALLSEIAPFVWRKHLDFAALSDVHDMKRQMQTFRGQTEVAVEGHNVKVGRGGIREIEFFAQTQQLIAGGRHPELRVRPTLAALDILANRDWITFQARDELSAAYQFLRRVEHRIQMIADEQTHTLPDSIEAVERFSRFFGYASREAFARDLLAHLDCVQGHYSKLFEGDPTGTAKLPIDYAGGAEDTVLLDHLRALGYKKPLMVATTLQQWMAGGYRILKVEATQRAFNDFVPALIEELARAEEPDNAVNAFDRLLQALHRGGRLISLLSQNRDLLTLIALVLGAAPRLGDMLARQPQIMDGLIDPRFFGAMPDRTELSARLAATLSDAGSYEEFLDRLRLFGQESLFLIGTRILSGTVSTQQASIAFADVAEGIVGTVHDLVSKQFVSQYGRIKDQETAILAMGKLGSREMTAASDLDLILIYDFDHEQPDSDGERSLHGAQYFARFTQRLISAFTTRTNYGVLYDVDMRLRPSGRAGPLASRLDSFAEYQEVEAWTWEHLALTRARVISASPEFRARIEQVIRAVLTRPRDAAIANDVAEMRAAIAQEKGEGDVWDLKYAAGGMVDIDFIAQYLQLVHAATMPDILAVGTLSAIDNAARLGVLAQPDADVLRPAARLYHDLTQILRLCVSDKFKPETAGDDLLRVLVRAGDAPDFSSLQARVKETQAEVRAIFNRLIGGNGE.

Residues 1 to 474 are adenylyl removase; that stretch reads MSSSAIDADI…HYSKLFEGDP (474 aa). Positions 480–988 are adenylyl transferase; sequence LPIDYAGGAE…FNRLIGGNGE (509 aa).

It belongs to the GlnE family. Requires Mg(2+) as cofactor.

It catalyses the reaction [glutamine synthetase]-O(4)-(5'-adenylyl)-L-tyrosine + phosphate = [glutamine synthetase]-L-tyrosine + ADP. The enzyme catalyses [glutamine synthetase]-L-tyrosine + ATP = [glutamine synthetase]-O(4)-(5'-adenylyl)-L-tyrosine + diphosphate. Its function is as follows. Involved in the regulation of glutamine synthetase GlnA, a key enzyme in the process to assimilate ammonia. When cellular nitrogen levels are high, the C-terminal adenylyl transferase (AT) inactivates GlnA by covalent transfer of an adenylyl group from ATP to specific tyrosine residue of GlnA, thus reducing its activity. Conversely, when nitrogen levels are low, the N-terminal adenylyl removase (AR) activates GlnA by removing the adenylyl group by phosphorolysis, increasing its activity. The regulatory region of GlnE binds the signal transduction protein PII (GlnB) which indicates the nitrogen status of the cell. This Rhodopseudomonas palustris (strain HaA2) protein is Bifunctional glutamine synthetase adenylyltransferase/adenylyl-removing enzyme.